The sequence spans 258 residues: Alpha-fibrinogenase (258 aa).

The first 18 residues, 1–18 (MVLIRVLANLVMLHLSYG), serve as a signal peptide directing secretion. Residues 19 to 24 (EKSSEL) constitute a propeptide that is removed on maturation. The Peptidase S1 domain maps to 25-249 (VIGGRPCNIN…YNDWIQSIIA (225 aa)). 6 cysteine pairs are disulfide-bonded: C31/C163, C50/C66, C98/C256, C142/C210, C174/C189, and C200/C225. Residue N44 is glycosylated (N-linked (GlcNAc...) asparagine). Catalysis depends on H65, which acts as the Charge relay system. N-linked (GlcNAc...) asparagine glycosylation is found at N79 and N101. The active-site Charge relay system is D110. The Charge relay system role is filled by S204.

This sequence belongs to the peptidase S1 family. Snake venom subfamily. In terms of assembly, monomer. Glycosylated. Contains 8.5% of hexoses, 5.8% of hexosamines and 0.8% of sialic acids. As to expression, expressed by the venom gland.

Its subcellular location is the secreted. Inhibited by diisopropylfluorophosphate (DFP) and PMSF, and partially by soybean trypsin inhibitor, but not by EDTA. In terms of biological role, degrades alpha chain of fibrinogen (FGA), and has strong caseinolytic activity. Cleaves oxidized insulin B-chain at '40-Tyr-|-Leu-41', '48-Phe-|-Phe-49' and '49-Phe-|-Tyr-50', and glucagon at the bonds '62-Tyr-|-Ser-63', 66-Leu-|-Asp-67' and '78-Leu-|-Met-79' bonds. This Macrovipera lebetinus (Levantine viper) protein is Alpha-fibrinogenase.